Consider the following 102-residue polypeptide: MTTASSKVAIKPLEDRIVVQPLDAEQTTASGLVIPDTAKEKPQEGVVLAVGPGRFEDGNRLPLDVTVGDVVLYSKYGGTEVKYNGEEYLVLSARDVLAIVEK.

Belongs to the GroES chaperonin family. As to quaternary structure, heptamer of 7 subunits arranged in a ring. Interacts with the chaperonin GroEL.

Its subcellular location is the cytoplasm. Its function is as follows. Together with the chaperonin GroEL, plays an essential role in assisting protein folding. The GroEL-GroES system forms a nano-cage that allows encapsulation of the non-native substrate proteins and provides a physical environment optimized to promote and accelerate protein folding. GroES binds to the apical surface of the GroEL ring, thereby capping the opening of the GroEL channel. The protein is Co-chaperonin GroES of Streptomyces avermitilis (strain ATCC 31267 / DSM 46492 / JCM 5070 / NBRC 14893 / NCIMB 12804 / NRRL 8165 / MA-4680).